Here is a 271-residue protein sequence, read N- to C-terminus: Shikimate dehydrogenase (NADP(+)) (271 aa).

Shikimate contacts are provided by residues 14–16 and Thr-61; that span reads SLS. Lys-65 (proton acceptor) is an active-site residue. Shikimate-binding residues include Asn-86 and Asp-101. Residues 125 to 129 and Ile-212 contribute to the NADP(+) site; that span reads GAGGA. Tyr-214 contributes to the shikimate binding site. Gly-235 is a binding site for NADP(+).

It belongs to the shikimate dehydrogenase family. In terms of assembly, homodimer.

The enzyme catalyses shikimate + NADP(+) = 3-dehydroshikimate + NADPH + H(+). It functions in the pathway metabolic intermediate biosynthesis; chorismate biosynthesis; chorismate from D-erythrose 4-phosphate and phosphoenolpyruvate: step 4/7. Its function is as follows. Involved in the biosynthesis of the chorismate, which leads to the biosynthesis of aromatic amino acids. Catalyzes the reversible NADPH linked reduction of 3-dehydroshikimate (DHSA) to yield shikimate (SA). This Clostridium perfringens (strain 13 / Type A) protein is Shikimate dehydrogenase (NADP(+)).